The primary structure comprises 96 residues: Co-chaperonin GroES 2 (96 aa).

Belongs to the GroES chaperonin family. In terms of assembly, heptamer of 7 subunits arranged in a ring. Interacts with the chaperonin GroEL.

It localises to the cytoplasm. In terms of biological role, together with the chaperonin GroEL, plays an essential role in assisting protein folding. The GroEL-GroES system forms a nano-cage that allows encapsulation of the non-native substrate proteins and provides a physical environment optimized to promote and accelerate protein folding. GroES binds to the apical surface of the GroEL ring, thereby capping the opening of the GroEL channel. The sequence is that of Co-chaperonin GroES 2 from Vibrio cholerae serotype O1 (strain ATCC 39315 / El Tor Inaba N16961).